A 197-amino-acid polypeptide reads, in one-letter code: Imidazoleglycerol-phosphate dehydratase (197 aa).

It belongs to the imidazoleglycerol-phosphate dehydratase family.

It localises to the cytoplasm. It catalyses the reaction D-erythro-1-(imidazol-4-yl)glycerol 3-phosphate = 3-(imidazol-4-yl)-2-oxopropyl phosphate + H2O. Its pathway is amino-acid biosynthesis; L-histidine biosynthesis; L-histidine from 5-phospho-alpha-D-ribose 1-diphosphate: step 6/9. This is Imidazoleglycerol-phosphate dehydratase from Chromohalobacter salexigens (strain ATCC BAA-138 / DSM 3043 / CIP 106854 / NCIMB 13768 / 1H11).